We begin with the raw amino-acid sequence, 532 residues long: Phosphoenolpyruvate carboxykinase (ATP) (532 aa).

Positions 60, 194, and 200 each coordinate substrate. ATP-binding positions include lysine 200, histidine 219, and 237–245 (GLSGTGKTT). Mn(2+) is bound by residues lysine 200 and histidine 219. Residue aspartate 258 participates in Mn(2+) binding. Glutamate 286, arginine 324, and threonine 449 together coordinate ATP. A substrate-binding site is contributed by arginine 324.

Belongs to the phosphoenolpyruvate carboxykinase (ATP) family. Mn(2+) is required as a cofactor.

It is found in the cytoplasm. It catalyses the reaction oxaloacetate + ATP = phosphoenolpyruvate + ADP + CO2. It participates in carbohydrate biosynthesis; gluconeogenesis. In terms of biological role, involved in the gluconeogenesis. Catalyzes the conversion of oxaloacetate (OAA) to phosphoenolpyruvate (PEP) through direct phosphoryl transfer between the nucleoside triphosphate and OAA. The sequence is that of Phosphoenolpyruvate carboxykinase (ATP) from Paracoccus denitrificans (strain Pd 1222).